A 196-amino-acid chain; its full sequence is ATP-dependent Clp protease proteolytic subunit (196 aa).

The active-site Nucleophile is S96. H121 is a catalytic residue.

Belongs to the peptidase S14 family. As to quaternary structure, fourteen ClpP subunits assemble into 2 heptameric rings which stack back to back to give a disk-like structure with a central cavity, resembling the structure of eukaryotic proteasomes.

The protein localises to the cytoplasm. The enzyme catalyses Hydrolysis of proteins to small peptides in the presence of ATP and magnesium. alpha-casein is the usual test substrate. In the absence of ATP, only oligopeptides shorter than five residues are hydrolyzed (such as succinyl-Leu-Tyr-|-NHMec, and Leu-Tyr-Leu-|-Tyr-Trp, in which cleavage of the -Tyr-|-Leu- and -Tyr-|-Trp bonds also occurs).. Functionally, cleaves peptides in various proteins in a process that requires ATP hydrolysis. Has a chymotrypsin-like activity. Plays a major role in the degradation of misfolded proteins. The sequence is that of ATP-dependent Clp protease proteolytic subunit from Streptococcus gordonii (strain Challis / ATCC 35105 / BCRC 15272 / CH1 / DL1 / V288).